Here is a 206-residue protein sequence, read N- to C-terminus: Shieldin complex subunit 1 (206 aa).

Polar residues-rich tracts occupy residues M1 to S15, R33 to F43, and D60 to N69. 2 disordered regions span residues M1 to P21 and R33 to N69.

In terms of assembly, component of the shieldin complex, consisting of SHLD1, SHLD2, SHLD3 and MAD2L2/REV7. Within the complex, SHLD2 forms a scaffold which interacts with a SHLD3-MAD2L2 subcomplex via its N-terminus, and with SHLD1 via its C-terminus. Interacts with ASTE1.

It localises to the chromosome. Functionally, component of the shieldin complex, which plays an important role in repair of DNA double-stranded breaks (DSBs). During G1 and S phase of the cell cycle, the complex functions downstream of TP53BP1 to promote non-homologous end joining (NHEJ) and suppress DNA end resection. Mediates various NHEJ-dependent processes including immunoglobulin class-switch recombination, and fusion of unprotected telomeres. The sequence is that of Shieldin complex subunit 1 from Bos taurus (Bovine).